We begin with the raw amino-acid sequence, 298 residues long: Isochorismatase domain-containing protein 1 (298 aa).

Tyrosine 160 is subject to Phosphotyrosine. Lysine 279 is subject to N6-succinyllysine.

Belongs to the isochorismatase family.

This is Isochorismatase domain-containing protein 1 (ISOC1) from Homo sapiens (Human).